Reading from the N-terminus, the 428-residue chain is Histidine--tRNA ligase (428 aa).

Belongs to the class-II aminoacyl-tRNA synthetase family.

The protein resides in the cytoplasm. It catalyses the reaction tRNA(His) + L-histidine + ATP = L-histidyl-tRNA(His) + AMP + diphosphate + H(+). The protein is Histidine--tRNA ligase of Sulfolobus acidocaldarius (strain ATCC 33909 / DSM 639 / JCM 8929 / NBRC 15157 / NCIMB 11770).